A 181-amino-acid polypeptide reads, in one-letter code: Cytolethal distending toxin subunit C (181 aa).

Residues methionine 1–glycine 15 form the signal peptide. Cysteine 16 is lipidated: N-palmitoyl cysteine. The S-diacylglycerol cysteine moiety is linked to residue cysteine 16. The region spanning glutamine 79–isoleucine 181 is the Ricin B-type lectin domain.

In terms of assembly, heterotrimer of 3 subunits, CdtA, CdtB and CdtC.

Its subcellular location is the cell outer membrane. In terms of biological role, part of the tripartite complex that is required for the CDT activity. CdtC, along with CdtA, probably forms a heterodimeric subunit required for the delivery of CdtB. The protein is Cytolethal distending toxin subunit C (cdtC) of Escherichia coli.